The primary structure comprises 91 residues: Antifungal protein opdH (91 aa).

Residues 1–18 form the signal peptide; it reads MQFSSLSLVFLAVIGAIA. Residues 19-33 constitute a propeptide that is removed on maturation; sequence NPIAVDSELENRDVQ. Cystine bridges form between Cys41-Cys69, Cys48-Cys76, and Cys61-Cys87.

Belongs to the antifungal protein pafB family.

It localises to the secreted. The protein resides in the host cytoplasm. In terms of biological role, antifungal protein; part of the gene cluster that mediates the biosynthesis of oxopyrrolidines, polyketide-amino acid hybrid compounds with feature structures of tetramic acid. Acts as an inhibitor of growth of various molds and yeasts. The protein is Antifungal protein opdH of Penicillium oxalicum (strain 114-2 / CGMCC 5302) (Penicillium decumbens).